Here is a 101-residue protein sequence, read N- to C-terminus: UPF0060 membrane protein ACIAD1364 (101 aa).

A run of 3 helical transmembrane segments spans residues 24-44 (WLWL…TLHP), 50-70 (IYAA…RFID), and 79-99 (IWGG…PQGL).

It belongs to the UPF0060 family.

The protein localises to the cell inner membrane. In Acinetobacter baylyi (strain ATCC 33305 / BD413 / ADP1), this protein is UPF0060 membrane protein ACIAD1364.